Reading from the N-terminus, the 317-residue chain is ATP synthase gamma chain (317 aa).

It belongs to the ATPase gamma chain family. In terms of assembly, F-type ATPases have 2 components, CF(1) - the catalytic core - and CF(0) - the membrane proton channel. CF(1) has five subunits: alpha(3), beta(3), gamma(1), delta(1), epsilon(1). CF(0) has three main subunits: a, b and c.

Its subcellular location is the cellular thylakoid membrane. In terms of biological role, produces ATP from ADP in the presence of a proton gradient across the membrane. The gamma chain is believed to be important in regulating ATPase activity and the flow of protons through the CF(0) complex. This Synechococcus sp. (strain CC9311) protein is ATP synthase gamma chain.